We begin with the raw amino-acid sequence, 697 residues long: Exocyst complex component 7 (697 aa).

Residues 1–384 (MIPPQEASAR…FSTVLTVFPI (384 aa)) form an SEC8 and ARHQ binding region. Coiled-coil stretches lie at residues 5–42 (QEAS…TRNM) and 63–85 (VHKQ…SCLD). Serine 133 is modified (phosphoserine). A disordered region spans residues 238-270 (FRKSSSSSGVPYSPAIPNKRKDTPTKKPIKRPG).

Belongs to the EXO70 family. As to quaternary structure, the exocyst complex is composed of EXOC1, EXOC2, EXOC3, EXOC4, EXOC5, EXOC6, EXOC7 and EXOC8. Interacts with RAB11FIP3. Interacts with ARHQ in a GTP-dependent manner.

The protein localises to the cytoplasm. It is found in the cytosol. It localises to the cell membrane. Its subcellular location is the midbody. The protein resides in the midbody ring. Its function is as follows. Component of the exocyst complex involved in the docking of exocytic vesicles with fusion sites on the plasma membrane. In adipocytes, plays a crucial role in targeting SLC2A4 vesicle to the plasma membrane in response to insulin, perhaps directing the vesicle to the precise site of fusion. It is required for neuron survival and plays an essential role in cortical development. The protein is Exocyst complex component 7 (Exoc7) of Mus musculus (Mouse).